A 109-amino-acid chain; its full sequence is Large ribosomal subunit protein uL22 (109 aa).

The protein belongs to the universal ribosomal protein uL22 family. As to quaternary structure, part of the 50S ribosomal subunit.

Its function is as follows. This protein binds specifically to 23S rRNA; its binding is stimulated by other ribosomal proteins, e.g. L4, L17, and L20. It is important during the early stages of 50S assembly. It makes multiple contacts with different domains of the 23S rRNA in the assembled 50S subunit and ribosome. Functionally, the globular domain of the protein is located near the polypeptide exit tunnel on the outside of the subunit, while an extended beta-hairpin is found that lines the wall of the exit tunnel in the center of the 70S ribosome. The chain is Large ribosomal subunit protein uL22 from Dehalococcoides mccartyi (strain ATCC BAA-2100 / JCM 16839 / KCTC 5957 / BAV1).